A 295-amino-acid chain; its full sequence is uncharacterized protein (295 aa).

Disordered regions lie at residues 33–52 (VDAPPASQIPGLSNLGDSHS) and 180–295 (LSKA…AELK). S50 is subject to Phosphoserine. Polar residues-rich tracts occupy residues 205 to 217 (QKNSSPTNFSKLI) and 241 to 251 (TSRASVLSQSP). Positions 267 to 276 (EASEGPEDTP) are enriched in acidic residues. Positions 277–289 (ESSQSPEESVSAS) are enriched in low complexity.

This is an uncharacterized protein from Homo sapiens (Human).